A 921-amino-acid polypeptide reads, in one-letter code: Isoleucine--tRNA ligase (921 aa).

The short motif at 59 to 69 is the 'HIGH' region element; the sequence is PYANGHLHIGH. An L-isoleucyl-5'-AMP-binding site is contributed by E569. A 'KMSKS' region motif is present at residues 610 to 614; the sequence is KMSKS. K613 serves as a coordination point for ATP. Zn(2+) contacts are provided by C896, C899, C911, and C914.

The protein belongs to the class-I aminoacyl-tRNA synthetase family. IleS type 1 subfamily. As to quaternary structure, monomer. It depends on Zn(2+) as a cofactor.

Its subcellular location is the cytoplasm. It catalyses the reaction tRNA(Ile) + L-isoleucine + ATP = L-isoleucyl-tRNA(Ile) + AMP + diphosphate. Catalyzes the attachment of isoleucine to tRNA(Ile). As IleRS can inadvertently accommodate and process structurally similar amino acids such as valine, to avoid such errors it has two additional distinct tRNA(Ile)-dependent editing activities. One activity is designated as 'pretransfer' editing and involves the hydrolysis of activated Val-AMP. The other activity is designated 'posttransfer' editing and involves deacylation of mischarged Val-tRNA(Ile). The sequence is that of Isoleucine--tRNA ligase from Campylobacter hominis (strain ATCC BAA-381 / DSM 21671 / CCUG 45161 / LMG 19568 / NCTC 13146 / CH001A).